Reading from the N-terminus, the 280-residue chain is Putative high affinity immunoglobulin gamma Fc receptor IB (280 aa).

An N-terminal signal peptide occupies residues 1-15; the sequence is MWFLTTLLLWVPVDG. Residues 16-198 lie on the Extracellular side of the membrane; sequence QVDTTKAVIT…LQLPTPVWFH (183 aa). Ig-like C2-type domains lie at 22 to 101 and 95 to 184; these read AVIT…LEIH and PIQL…ISQY. 2 disulfides stabilise this stretch: Cys-43-Cys-85 and Cys-124-Cys-168. Residues Asn-59, Asn-152, and Asn-163 are each glycosylated (N-linked (GlcNAc...) asparagine). Residues 199 to 219 traverse the membrane as a helical segment; the sequence is VLFYLAVGIMFLVNTVLWVTI. Topologically, residues 220–280 are cytoplasmic; it reads RKELKRKKKW…VHRKEPQGAT (61 aa). A disordered region spans residues 258-280; it reads KCQEQKEEQLQEGVHRKEPQGAT.

This sequence belongs to the immunoglobulin superfamily. FCGR1 family.

The protein localises to the cell membrane. Functionally, may bind to the Fc region of immunoglobulins gamma with a low affinity compared to FCGR1A. May function in the humoral immune response. This Homo sapiens (Human) protein is Putative high affinity immunoglobulin gamma Fc receptor IB.